The following is a 209-amino-acid chain: Chalcone isomerase-like protein 2 (209 aa).

Belongs to the chalcone isomerase family. As to quaternary structure, component an active demethylxanthohumol (DMX) biosynthetic metabolon in glandular trichomes (lupulin glands) that encompasses a chalcone synthase (CHS) and a membrane-bound prenyltransferase. Interacts with CHS_H1 and PT1L. In terms of tissue distribution, mostly expressed in glandular trichomes (lupulin glands), and, to a lower extent, in cones, cones bracts, leaves, stems and roots.

It localises to the cytoplasm. It catalyses the reaction a chalcone = a flavanone.. It participates in secondary metabolite biosynthesis; flavonoid biosynthesis. Functionally, involved in the biosynthesis of prenylated phenolics natural products which contribute to the bitter taste of beer and display broad biological activities. Involved in anthocyanin biosynthesis. Polyketide binding proteins (PBP) which promotes the catalytic activities of CHS_H1 and PT1L and triggers demethylxanthohumol (DMX) production. The polypeptide is Chalcone isomerase-like protein 2 (Humulus lupulus (European hop)).